The following is a 294-amino-acid chain: Lycopene elongase/hydratase (294 aa).

8 helical membrane-spanning segments follow: residues 31–51 (FWLYLGGPVIVGVSYAADGPG), 53–73 (LFSPLAIALFLYFTIPGNVFL), 115–135 (LALLFALVLPTLGIVALLAWM), 160–180 (GLYILPGVIGYAAIEGVAPPA), 182–202 (AVVGAWLWAMGMHTFSAIPDI), 222–242 (TYYYCVMCWLMAAFVFNFTHW), 243–263 (VFGVLLLVYPGLVFGILGVGV), and 274–294 (AINTVVGMVFTLIALWVMLYG).

This sequence belongs to the UbiA prenyltransferase family.

The protein resides in the cell membrane. It carries out the reaction all-trans-lycopene + dimethylallyl diphosphate + H2O = dihydroisopentenyldehydrorhodopin + diphosphate. It catalyses the reaction isopentenyldehydrorhodopin + dimethylallyl diphosphate + H2O = dihydrobisanhydrobacterioruberin + diphosphate. The protein operates within carotenoid biosynthesis. Its function is as follows. Involved in the biosynthesis of the acyclic C50 carotenoid bacterioruberin (BR). Acts as a bifunctional elongase/hydratase that catalyzes the elongation of lycopene by attaching a C(5) isoprene unit at C-2, as well as the hydroxylation of the previous end of the molecule. The enzyme acts at both ends of the substrate, and catalyzes the conversion of lycopene to the C(45) intermediate dihydroisopentenyldehydrorhodopin (DH-IDR) and the conversion of isopentenyldehydrorhodopin (IDR) to the C(50) carotenoid dihydrobisanhydrobacterioruberin (DH-BABR). Can also catalyze the conversion of lycopene to tetrahydrobisanhydrobacterioruberin (TH-BABR). The sequence is that of Lycopene elongase/hydratase from Haloarcula japonica (strain ATCC 49778 / DSM 6131 / JCM 7785 / NBRC 101032 / NCIMB 13157 / TR-1).